We begin with the raw amino-acid sequence, 210 residues long: Shikimate kinase (210 aa).

34-39 (GVGKSV) is an ATP binding site. Serine 38 serves as a coordination point for Mg(2+). Residues aspartate 56, arginine 80, and glycine 102 each contribute to the substrate site. ATP is bound at residue arginine 140. Arginine 159 lines the substrate pocket.

It belongs to the shikimate kinase family. Monomer. Requires Mg(2+) as cofactor.

The protein resides in the cytoplasm. It catalyses the reaction shikimate + ATP = 3-phosphoshikimate + ADP + H(+). It participates in metabolic intermediate biosynthesis; chorismate biosynthesis; chorismate from D-erythrose 4-phosphate and phosphoenolpyruvate: step 5/7. In terms of biological role, catalyzes the specific phosphorylation of the 3-hydroxyl group of shikimic acid using ATP as a cosubstrate. The sequence is that of Shikimate kinase from Bartonella henselae (strain ATCC 49882 / DSM 28221 / CCUG 30454 / Houston 1) (Rochalimaea henselae).